Reading from the N-terminus, the 553-residue chain is Membrane protein insertase YidC (553 aa).

Residues 3–23 form a helical membrane-spanning segment; the sequence is IKRTILWVIFSLSVVLLFDNW. Positions 44-64 are disordered; sequence AAAPGGTPAGDVPKAAAPAAA. Transmembrane regions (helical) follow at residues 359–379, 429–449, 467–487, and 507–527; these read LLGN…LVFF, LGGC…YWVL, LASP…MFVQ, and PIAF…YWVV.

This sequence belongs to the OXA1/ALB3/YidC family. Type 1 subfamily. As to quaternary structure, interacts with the Sec translocase complex via SecD. Specifically interacts with transmembrane segments of nascent integral membrane proteins during membrane integration.

The protein localises to the cell inner membrane. In terms of biological role, required for the insertion and/or proper folding and/or complex formation of integral membrane proteins into the membrane. Involved in integration of membrane proteins that insert both dependently and independently of the Sec translocase complex, as well as at least some lipoproteins. Aids folding of multispanning membrane proteins. This chain is Membrane protein insertase YidC, found in Ralstonia nicotianae (strain ATCC BAA-1114 / GMI1000) (Ralstonia solanacearum).